The chain runs to 429 residues: CBL-interacting serine/threonine-protein kinase 7 (429 aa).

A Protein kinase domain is found at Tyr25–Phe280. ATP-binding positions include Leu31–Val39 and Lys54. The active-site Proton acceptor is Asp149. Residues Asp167–Glu195 form an activation loop region. Ser171 is subject to Phosphoserine. Thr184 is modified (phosphothreonine). Positions Ser302–Glu326 constitute an NAF domain. Residues Lys330–Met363 form a PPI region.

It belongs to the protein kinase superfamily. CAMK Ser/Thr protein kinase family. SNF1 subfamily. Interacts with CBL1, CBL2 and CBL3. Mn(2+) serves as cofactor. Autophosphorylated. In terms of tissue distribution, strongly expressed in leaves, but barely expressed in roots, stems or flowers.

The enzyme catalyses L-seryl-[protein] + ATP = O-phospho-L-seryl-[protein] + ADP + H(+). It catalyses the reaction L-threonyl-[protein] + ATP = O-phospho-L-threonyl-[protein] + ADP + H(+). Its function is as follows. CIPK serine-threonine protein kinases interact with CBL proteins. Binding of a CBL protein to the regulatory NAF domain of CIPK protein lead to the activation of the kinase in a calcium-dependent manner. Phosphorylates the rice sucrose synthase (SuSy) in vitro in an allosteric manner. Involved in cold response. The chain is CBL-interacting serine/threonine-protein kinase 7 (CIPK7) from Arabidopsis thaliana (Mouse-ear cress).